The following is a 253-amino-acid chain: DNA repair protein RecO (253 aa).

This sequence belongs to the RecO family.

Functionally, involved in DNA repair and RecF pathway recombination. The polypeptide is DNA repair protein RecO (Nitrobacter hamburgensis (strain DSM 10229 / NCIMB 13809 / X14)).